Reading from the N-terminus, the 283-residue chain is MSQCPFSSNPPAEWHNAELNFSDSMSYGDYLDLGRILSAQHPLSPDHNEMLFIIQHQTSELWMKLMLHELKAAREHVRQGQLPPAFKMLARVSRIFDQLVHAWAVLATMTPSEYKSIRPYLGQSSGFQSFQYREIEFILGNKSAALLRPHAHRPELLQSLEASIATPSMYDEAIALMARSGLSIDPARLALDSTTTTQHDPSVEAAWREVYANPSAYWDLYQLAEKFIDLEDSFRQWRFRHVTTVERIIGFQPGTGGTEGVGYLRKMLDTVLFPELWRVRSSL.

Substrate-binding positions include 52–56 (FIIQH), Y114, and R118. A heme-binding site is contributed by H241. T255 lines the substrate pocket.

Belongs to the tryptophan 2,3-dioxygenase family. As to quaternary structure, homotetramer. It depends on heme as a cofactor.

It catalyses the reaction L-tryptophan + O2 = N-formyl-L-kynurenine. It functions in the pathway amino-acid degradation; L-tryptophan degradation via kynurenine pathway; L-kynurenine from L-tryptophan: step 1/2. In terms of biological role, heme-dependent dioxygenase that catalyzes the oxidative cleavage of the L-tryptophan (L-Trp) pyrrole ring and converts L-tryptophan to N-formyl-L-kynurenine. Catalyzes the oxidative cleavage of the indole moiety. The sequence is that of Tryptophan 2,3-dioxygenase from Pseudomonas fluorescens (strain ATCC BAA-477 / NRRL B-23932 / Pf-5).